Consider the following 322-residue polypeptide: Elongation factor Ts, mitochondrial (322 aa).

The protein belongs to the EF-Ts family.

It is found in the mitochondrion. In terms of biological role, associates with the EF-Tu.GDP complex and induces the exchange of GDP to GTP. It remains bound to the aminoacyl-tRNA.EF-Tu.GTP complex up to the GTP hydrolysis stage on the ribosome. The chain is Elongation factor Ts, mitochondrial from Chlamydomonas reinhardtii (Chlamydomonas smithii).